The primary structure comprises 293 residues: Dioxygenase cdmA (293 aa).

Fe cation contacts are provided by His135, Asp137, and His212.

This sequence belongs to the PhyH family. Homodimer. Requires Fe cation as cofactor.

The catalysed reaction is chrodrimanin C + 2-oxoglutarate + O2 = verruculide A + succinate + CO2 + H2O. The enzyme catalyses chrodrimanin H + 2-oxoglutarate + O2 = chrodrimanin E + succinate + CO2 + H2O. It functions in the pathway secondary metabolite biosynthesis; terpenoid biosynthesis. Functionally, dioxygenase; part of the gene cluster that mediates the biosynthesis of chrodrimanin B, a meroterpenoid that acts as a potent blocker of insect GABA-gated chloride channels. The first step of the pathway is the biosynthesis of 6-hydroxymellein by the polyketide synthase cdmE. The prenyltransferase cdmH acts as a 6-hydroxymellein 5-farnesyltransferase and produces the hydrophobic metabolite verruculide C. The FAD-dependent monooxygenase cdmI further converts verruculide C into verruculide B. The terpene cyclase cdmG then produced the pentacyclic molecule 3-hydroxypentacecilide A, the backbone structure of chrodrimanin B, via folding the farnesyl moiety of the substrate into the chair-boat conformation. The short-chain dehydrogenase/reductase cdmF functions as the 3-OH dehydrogenase that oxidizes the C-3 hydroxyl group of 3-hydroxypentacecilide A and produces chrodrimanin C, the dehydrogenated product of 3-hydroxypentacecilide A. The cytochrome P450 monooxygenase cdmJ then accepts both 3-hydroxypentacecilide A and chrodrimanin C and functions as a C-7-beta-hydroxylase to produce respectively chrodrimanin H and chrodrimanin F. The dioxygenase cdmA accepts chrodrimanin H to afford chrodrimanin E, which is further transformed to chrodrimanin A by the dioxygenase cdmD. CdmA can also accept chrodrimanin C as substrate to convert it into verruculide A, which is further converted into chrodrimanin T by cdmD. The last step of the biosynthesis is proposed to be performed by the acetyltransferase cdmC which acetylates chrodrimanin A to yield chrodrimanin B. The pathway may also lead to the production of additional shunt products, including chrodrimanins T and U. This is Dioxygenase cdmA from Talaromyces verruculosus (Penicillium verruculosum).